Here is a 520-residue protein sequence, read N- to C-terminus: Peptide chain release factor 3 (520 aa).

Residues 8–277 form the tr-type G domain; sequence ESRKTFAIIS…HAPMPNARQT (270 aa). GTP-binding positions include 17 to 24, 85 to 89, and 139 to 142; these read SHPDAGKT, DTPGH, and NKLD.

Belongs to the TRAFAC class translation factor GTPase superfamily. Classic translation factor GTPase family. PrfC subfamily.

It is found in the cytoplasm. In terms of biological role, increases the formation of ribosomal termination complexes and stimulates activities of RF-1 and RF-2. It binds guanine nucleotides and has strong preference for UGA stop codons. It may interact directly with the ribosome. The stimulation of RF-1 and RF-2 is significantly reduced by GTP and GDP, but not by GMP. The chain is Peptide chain release factor 3 from Staphylococcus saprophyticus subsp. saprophyticus (strain ATCC 15305 / DSM 20229 / NCIMB 8711 / NCTC 7292 / S-41).